Here is a 102-residue protein sequence, read N- to C-terminus: U3-aranetoxin-Ce1a (102 aa).

Residues 1–21 form the signal peptide; that stretch reads MKHLSIFFVFFCCICVMLCDA.

The protein belongs to the neurotoxin 20 family. In terms of tissue distribution, expressed by the venom gland.

It is found in the secreted. The protein is U3-aranetoxin-Ce1a of Caerostris extrusa (Bark spider).